A 393-amino-acid chain; its full sequence is Prokineticin receptor 1 (393 aa).

Topologically, residues 1–62 (METTMGFMDD…TNSRTFFAAK (62 aa)) are extracellular. Residues asparagine 11, asparagine 14, and asparagine 36 are each glycosylated (N-linked (GlcNAc...) asparagine). A helical membrane pass occupies residues 63-83 (IVIGMALVGIMLVCGIGNFIF). Over 84–98 (IAALVRYKKLRNLTN) the chain is Cytoplasmic. The helical transmembrane segment at 99–119 (LLIANLAISDFLVAIVCCPFE) threads the bilayer. The Extracellular portion of the chain corresponds to 120–146 (MDYYVVRQLSWEHGHVLCTSVNYLRTV). The cysteines at positions 137 and 217 are disulfide-linked. Residues 147–167 (SLYVSTNALLAIAIDRYLAIV) traverse the membrane as a helical segment. Residues 168 to 180 (HPLRPRMKCQTAT) are Cytoplasmic-facing. The helical transmembrane segment at 181 to 201 (GLIALVWTVSILIAIPSAYFT) threads the bilayer. Topologically, residues 202–232 (TETVLVIVKSQEKIFCGQIWPVDQQLYYKSY) are extracellular. Residues 233 to 253 (FLFIFGIEFVGPVVTMTLCYA) form a helical membrane-spanning segment. At 254–282 (RISRELWFKAVPGFQTEQIRKRLRCRRKT) the chain is on the cytoplasmic side. A helical transmembrane segment spans residues 283–303 (VLVLMCILTAYVLCWAPFYGF). At 304–322 (TIVRDFFPTVFVKEKHYLT) the chain is on the extracellular side. A helical transmembrane segment spans residues 323-343 (AFYIVECIAMSNSMINTLCFV). The Cytoplasmic portion of the chain corresponds to 344–393 (TVKNDTVKYFKKIMLLHWKASYNGGKSSADLDLKTIGMPATEEVDCIRLK).

The protein belongs to the G-protein coupled receptor 1 family. In terms of tissue distribution, localizes to glandular epithelium, stroma and vascular endothelial cells of first trimester decidua (at protein level). Up-regulated in first trimester decidua when compared with non-pregnant endometrium. Expressed in the stomach, throughout the small intestine, colon, rectum, thyroid gland, pituitary gland, salivary gland, adrenal gland, testis, ovary, brain, spleen, prostate and pancreas.

The protein resides in the cell membrane. Functionally, receptor for prokineticin 1. Exclusively coupled to the G(q) subclass of heteromeric G proteins. Activation leads to mobilization of calcium, stimulation of phosphoinositide turnover and activation of p44/p42 mitogen-activated protein kinase. May play a role during early pregnancy. This is Prokineticin receptor 1 (PROKR1) from Homo sapiens (Human).